The primary structure comprises 434 residues: 3-phosphoshikimate 1-carboxyvinyltransferase (434 aa).

3-phosphoshikimate is bound by residues Lys15, Ser16, and Arg20. Lys15 is a phosphoenolpyruvate binding site. Positions 96 and 124 each coordinate phosphoenolpyruvate. The 3-phosphoshikimate site is built by Ser169, Gln171, Ser195, Asp319, and Lys346. Gln171 provides a ligand contact to phosphoenolpyruvate. The active-site Proton acceptor is the Asp319. Residues Arg350 and Arg394 each contribute to the phosphoenolpyruvate site.

The protein belongs to the EPSP synthase family. As to quaternary structure, monomer.

The protein resides in the cytoplasm. The enzyme catalyses 3-phosphoshikimate + phosphoenolpyruvate = 5-O-(1-carboxyvinyl)-3-phosphoshikimate + phosphate. It participates in metabolic intermediate biosynthesis; chorismate biosynthesis; chorismate from D-erythrose 4-phosphate and phosphoenolpyruvate: step 6/7. Functionally, catalyzes the transfer of the enolpyruvyl moiety of phosphoenolpyruvate (PEP) to the 5-hydroxyl of shikimate-3-phosphate (S3P) to produce enolpyruvyl shikimate-3-phosphate and inorganic phosphate. The polypeptide is 3-phosphoshikimate 1-carboxyvinyltransferase (Chlorobium phaeobacteroides (strain DSM 266 / SMG 266 / 2430)).